A 458-amino-acid chain; its full sequence is ATP synthase subunit beta (458 aa).

Position 148 to 155 (148 to 155 (GGAGVGKT)) interacts with ATP.

It belongs to the ATPase alpha/beta chains family. F-type ATPases have 2 components, CF(1) - the catalytic core - and CF(0) - the membrane proton channel. CF(1) has five subunits: alpha(3), beta(3), gamma(1), delta(1), epsilon(1). CF(0) has three main subunits: a(1), b(2) and c(9-12). The alpha and beta chains form an alternating ring which encloses part of the gamma chain. CF(1) is attached to CF(0) by a central stalk formed by the gamma and epsilon chains, while a peripheral stalk is formed by the delta and b chains.

It is found in the cell inner membrane. The catalysed reaction is ATP + H2O + 4 H(+)(in) = ADP + phosphate + 5 H(+)(out). Functionally, produces ATP from ADP in the presence of a proton gradient across the membrane. The catalytic sites are hosted primarily by the beta subunits. This Shewanella woodyi (strain ATCC 51908 / MS32) protein is ATP synthase subunit beta.